Consider the following 50-residue polypeptide: Light-harvesting protein B-870 beta chain (50 aa).

At 2–22 (ADNTDLSFTGLTDEQAQELHS) the chain is on the cytoplasmic side. A bacteriochlorophyll is bound by residues histidine 21 and histidine 39. A helical membrane pass occupies residues 23 to 45 (VYMSGLFLFAAVAVVAHLATYIW). Over 46-50 (RPWFG) the chain is Periplasmic.

It belongs to the antenna complex beta subunit family. As to quaternary structure, the core complex is formed by different alpha and beta chains, binding bacteriochlorophyll molecules, and arranged most probably in tetrameric structures disposed around the reaction center. The non-pigmented gamma chains may constitute additional components.

It is found in the cell inner membrane. Its function is as follows. Antenna complexes are light-harvesting systems, which transfer the excitation energy to the reaction centers. This chain is Light-harvesting protein B-870 beta chain (pufB), found in Roseobacter denitrificans (strain ATCC 33942 / OCh 114) (Erythrobacter sp. (strain OCh 114)).